We begin with the raw amino-acid sequence, 174 residues long: U1 small nuclear ribonucleoprotein C (174 aa).

The Matrin-type zinc-finger motif lies at 4 to 36; sequence YYCDYCDKYLTHDSPSVRKSHTVGKQHKLAVQL. 2 stretches are compositionally biased toward low complexity: residues 82–109 and 122–140; these read QQQQ…QQGM and PHQF…FQPP. The segment at 82 to 174 is disordered; it reads QQQQQQQQQQ…QHNQPTIPGL (93 aa). A compositionally biased stretch (basic residues) spans 141–163; the sequence is HHQHHPHQQHQQHQQHQHQHQHQ. The segment covering 164 to 174 has biased composition (low complexity); it reads QQHNQPTIPGL.

The protein belongs to the U1 small nuclear ribonucleoprotein C family. In terms of assembly, component of the U1 snRNP. The U1 snRNP is composed of the U1 snRNA and the 7 core Sm proteins SNRPB, SNRPD1, SNRPD2, SNRPD3, SNRPE, SNRPF and SNRPG that assemble in a heptameric protein ring on the Sm site of the small nuclear RNA to form the core snRNP, and at least 3 U1 snRNP-specific proteins SNRNP70/U1-70K, SNRPA/U1-A and SNRPC/U1-C. SNRPC/U1-C interacts with U1 snRNA and the 5' splice-site region of the pre-mRNA.

It is found in the nucleus. In terms of biological role, component of the spliceosomal U1 snRNP, which is essential for recognition of the pre-mRNA 5' splice-site and the subsequent assembly of the spliceosome. SNRPC/U1-C is directly involved in initial 5' splice-site recognition for both constitutive and regulated alternative splicing. The interaction with the 5' splice-site seems to precede base-pairing between the pre-mRNA and the U1 snRNA. Stimulates commitment or early (E) complex formation by stabilizing the base pairing of the 5' end of the U1 snRNA and the 5' splice-site region. The protein is U1 small nuclear ribonucleoprotein C of Dictyostelium discoideum (Social amoeba).